A 389-amino-acid polypeptide reads, in one-letter code: Protein IQ-domain 26 (389 aa).

IQ domains lie at 106–134 and 135–157; these read ERWA…GLVK and LQAL…SMQA. A calmodulin-binding region spans residues 137-151; it reads ALVRGYLVRKRAAET. Residues 347 to 374 form a disordered region; that stretch reads SVSGVRMVQPQPQPQTQTQQQKRSPCSY.

It belongs to the IQD family. As to quaternary structure, binds to multiple calmodulin (CaM) in the presence of Ca(2+) and CaM-like proteins.

The protein localises to the cell membrane. It localises to the cytoplasm. The protein resides in the cytoskeleton. Its function is as follows. May be involved in cooperative interactions with calmodulins or calmodulin-like proteins. Recruits calmodulin proteins to microtubules, thus being a potential scaffold in cellular signaling and trafficking. May associate with nucleic acids and regulate gene expression at the transcriptional or post-transcriptional level. The protein is Protein IQ-domain 26 of Arabidopsis thaliana (Mouse-ear cress).